We begin with the raw amino-acid sequence, 261 residues long: Short chain dehydrogenase/reductase astE (261 aa).

Residues Ile24, Asp70, Asn97, and Lys131 each contribute to the NADP(+) site. Catalysis depends on proton donor residues Ser150 and Tyr164. NADP(+) is bound by residues Tyr164, Lys168, Val197, and Thr199. Lys168 functions as the Lowers pKa of active site Tyr in the catalytic mechanism.

Belongs to the short-chain dehydrogenases/reductases (SDR) family.

It participates in secondary metabolite biosynthesis; terpenoid biosynthesis. Functionally, short chain dehydrogenase/reductase; part of the gene cluster that mediates the biosynthesis of astellolides, drimane-type sesquiterpene esters that show antimicrobial, anti-inflammatory, and anti-tumor activities. The first step in astellolide biosynthesis is performed by the sesquiterpene cyclase astC that catalyzes the formation of drimanyl pyrophosphate from farnesyl pyrophosphate. Drimanyl pyrophosphate is then dephosphorylated by the sesquiterpene phosphatase astI to produce drimanyl monophosphate which is further dephosphorylated to drim-8-ene-11-ol by atsK. Drim-8-ene-11-ol is converted to confertifolin, probably by the cytochrome P450 monooxygenase astD and/or the dehydrogenase astE. The cytochrome P450 monooxygenases astB, astF and astJ then hydroxylate confertifolin at C6, C14, or C15 to form trihydroxy confertifolin. The nonribosomal peptide synthetase astA catalyzes ester bond formation between trihydroxy contifolin and benzoic acid (BA) or 4-hydroxy benzoic acid (4HBA), leading to the formation of dideacetyl astellolides A and B, respectively. Finally, the O-acetyltransferase astG converts dideacetyl astellolides A and B into deacetyl astellolides A and B. This chain is Short chain dehydrogenase/reductase astE, found in Aspergillus oryzae (strain ATCC 42149 / RIB 40) (Yellow koji mold).